Consider the following 217-residue polypeptide: UPF0502 protein Smlt0097 (217 aa).

The protein belongs to the UPF0502 family.

The protein is UPF0502 protein Smlt0097 of Stenotrophomonas maltophilia (strain K279a).